The chain runs to 254 residues: 3-dehydroquinate dehydratase (254 aa).

Residues Glu-47–Arg-49 and Arg-83 contribute to the 3-dehydroquinate site. The Proton donor/acceptor role is filled by His-144. Lys-171 acts as the Schiff-base intermediate with substrate in catalysis. The 3-dehydroquinate site is built by Arg-214, Ser-233, and Gln-237.

The protein belongs to the type-I 3-dehydroquinase family. As to quaternary structure, homodimer.

The enzyme catalyses 3-dehydroquinate = 3-dehydroshikimate + H2O. Its pathway is metabolic intermediate biosynthesis; chorismate biosynthesis; chorismate from D-erythrose 4-phosphate and phosphoenolpyruvate: step 3/7. In terms of biological role, involved in the third step of the chorismate pathway, which leads to the biosynthesis of aromatic amino acids. Catalyzes the cis-dehydration of 3-dehydroquinate (DHQ) and introduces the first double bond of the aromatic ring to yield 3-dehydroshikimate. This Bacillus licheniformis (strain ATCC 14580 / DSM 13 / JCM 2505 / CCUG 7422 / NBRC 12200 / NCIMB 9375 / NCTC 10341 / NRRL NRS-1264 / Gibson 46) protein is 3-dehydroquinate dehydratase.